We begin with the raw amino-acid sequence, 433 residues long: Serine--tRNA ligase (433 aa).

L-serine is bound at residue 236–238 (TAE). 267–269 (RSE) is a binding site for ATP. Glu290 is an L-serine binding site. An ATP-binding site is contributed by 354–357 (EISS). Ser394 contributes to the L-serine binding site.

Belongs to the class-II aminoacyl-tRNA synthetase family. Type-1 seryl-tRNA synthetase subfamily. In terms of assembly, homodimer. The tRNA molecule binds across the dimer.

The protein resides in the cytoplasm. The catalysed reaction is tRNA(Ser) + L-serine + ATP = L-seryl-tRNA(Ser) + AMP + diphosphate + H(+). It carries out the reaction tRNA(Sec) + L-serine + ATP = L-seryl-tRNA(Sec) + AMP + diphosphate + H(+). It participates in aminoacyl-tRNA biosynthesis; selenocysteinyl-tRNA(Sec) biosynthesis; L-seryl-tRNA(Sec) from L-serine and tRNA(Sec): step 1/1. In terms of biological role, catalyzes the attachment of serine to tRNA(Ser). Is also able to aminoacylate tRNA(Sec) with serine, to form the misacylated tRNA L-seryl-tRNA(Sec), which will be further converted into selenocysteinyl-tRNA(Sec). This chain is Serine--tRNA ligase, found in Acidiphilium cryptum (strain JF-5).